Here is a 296-residue protein sequence, read N- to C-terminus: Tyrosine recombinase XerC (296 aa).

Residues 1 to 84 enclose the Core-binding (CB) domain; the sequence is MEKIQQAYLY…TLRSFYEYWM (84 aa). In terms of domain architecture, Tyr recombinase spans 105–286; it reads YLPHFFYEEE…TNEQLRKVYL (182 aa). Residues Arg145, Lys169, His238, Arg241, and His264 contribute to the active site. Tyr273 serves as the catalytic O-(3'-phospho-DNA)-tyrosine intermediate.

It belongs to the 'phage' integrase family. XerC subfamily. Forms a cyclic heterotetrameric complex composed of two molecules of XerC and two molecules of XerD.

The protein resides in the cytoplasm. Its function is as follows. Site-specific tyrosine recombinase, which acts by catalyzing the cutting and rejoining of the recombining DNA molecules. The XerC-XerD complex is essential to convert dimers of the bacterial chromosome into monomers to permit their segregation at cell division. It also contributes to the segregational stability of plasmids. This Staphylococcus saprophyticus subsp. saprophyticus (strain ATCC 15305 / DSM 20229 / NCIMB 8711 / NCTC 7292 / S-41) protein is Tyrosine recombinase XerC.